The primary structure comprises 119 residues: Small ribosomal subunit protein uS13 (119 aa).

A compositionally biased stretch (basic residues) spans 92–110; it reads RKDTCKRSTKKNARTRKGP. Positions 92–119 are disordered; sequence RKDTCKRSTKKNARTRKGPKKDNRWKER.

It belongs to the universal ribosomal protein uS13 family. In terms of assembly, part of the 30S ribosomal subunit. Forms a loose heterodimer with protein S19. Forms two bridges to the 50S subunit in the 70S ribosome.

Located at the top of the head of the 30S subunit, it contacts several helices of the 16S rRNA. In the 70S ribosome it contacts the 23S rRNA (bridge B1a) and protein L5 of the 50S subunit (bridge B1b), connecting the 2 subunits; these bridges are implicated in subunit movement. Contacts the tRNAs in the A and P-sites. In Mycoplasma sp, this protein is Small ribosomal subunit protein uS13.